The chain runs to 165 residues: Thiol peroxidase (165 aa).

Positions 18–164 (RKVGDKAPNF…YEAAIEAAKK (147 aa)) constitute a Thioredoxin domain. Cys60 acts as the Cysteine sulfenic acid (-SOH) intermediate in catalysis. Cys60 and Cys94 form a disulfide bridge.

This sequence belongs to the peroxiredoxin family. Tpx subfamily. Homodimer.

It carries out the reaction a hydroperoxide + [thioredoxin]-dithiol = an alcohol + [thioredoxin]-disulfide + H2O. Its function is as follows. Thiol-specific peroxidase that catalyzes the reduction of hydrogen peroxide and organic hydroperoxides to water and alcohols, respectively. Plays a role in cell protection against oxidative stress by detoxifying peroxides. The protein is Thiol peroxidase of Listeria monocytogenes serovar 1/2a (strain ATCC BAA-679 / EGD-e).